The following is a 299-amino-acid chain: Regucalcin (299 aa).

Glutamate 18 is a binding site for a divalent metal cation. Residues arginine 101, asparagine 103, and glutamate 121 each contribute to the substrate site. At lysine 144 the chain carries N6-succinyllysine. A divalent metal cation is bound by residues asparagine 154 and aspartate 204. Aspartate 204 (proton donor/acceptor) is an active-site residue. 2 positions are modified to N6-succinyllysine: lysine 244 and lysine 253.

This sequence belongs to the SMP-30/CGR1 family. Monomer. The cofactor is Zn(2+). Mn(2+) is required as a cofactor. Requires Ca(2+) as cofactor. Mg(2+) serves as cofactor.

It localises to the cytoplasm. The catalysed reaction is D-glucono-1,5-lactone + H2O = D-gluconate + H(+). Its function is as follows. Gluconolactonase with low activity towards other sugar lactones, including gulonolactone and galactonolactone. Can also hydrolyze diisopropyl phosphorofluoridate and phenylacetate (in vitro). Calcium-binding protein. Modulates Ca(2+) signaling, and Ca(2+)-dependent cellular processes and enzyme activities. This is Regucalcin (RGN) from Pongo abelii (Sumatran orangutan).